The sequence spans 246 residues: Ribonuclease 3 (246 aa).

Positions 20 to 145 (FSKLEKILGF…FVGAIYLDRG (126 aa)) constitute an RNase III domain. Mg(2+) is bound at residue Glu62. Residue Asp66 is part of the active site. Residues Asn131 and Glu134 each coordinate Mg(2+). The active site involves Glu134. The DRBM domain occupies 173–241 (SYKSLLIEWC…SKRGYFVFQS (69 aa)).

It belongs to the ribonuclease III family. In terms of assembly, homodimer. Mg(2+) serves as cofactor.

It is found in the cytoplasm. The enzyme catalyses Endonucleolytic cleavage to 5'-phosphomonoester.. Functionally, digests double-stranded RNA. Involved in the processing of primary rRNA transcript to yield the immediate precursors to the large and small rRNAs (23S and 16S). Processes some mRNAs, and tRNAs when they are encoded in the rRNA operon. Processes pre-crRNA and tracrRNA of type II CRISPR loci if present in the organism. This is Ribonuclease 3 from Flavobacterium psychrophilum (strain ATCC 49511 / DSM 21280 / CIP 103535 / JIP02/86).